Reading from the N-terminus, the 670-residue chain is DNA ligase (670 aa).

NAD(+)-binding positions include 34-38 (DFEFD), 83-84 (SL), and Glu113. Lys115 acts as the N6-AMP-lysine intermediate in catalysis. Residues Arg136, Glu173, Lys288, and Lys312 each contribute to the NAD(+) site. Positions 406, 409, 424, and 430 each coordinate Zn(2+). The BRCT domain maps to 591-670 (PESDKFAGKS…EAEFISLLNS (80 aa)).

It belongs to the NAD-dependent DNA ligase family. LigA subfamily. Mg(2+) serves as cofactor. It depends on Mn(2+) as a cofactor.

It carries out the reaction NAD(+) + (deoxyribonucleotide)n-3'-hydroxyl + 5'-phospho-(deoxyribonucleotide)m = (deoxyribonucleotide)n+m + AMP + beta-nicotinamide D-nucleotide.. DNA ligase that catalyzes the formation of phosphodiester linkages between 5'-phosphoryl and 3'-hydroxyl groups in double-stranded DNA using NAD as a coenzyme and as the energy source for the reaction. It is essential for DNA replication and repair of damaged DNA. The protein is DNA ligase of Cytophaga hutchinsonii (strain ATCC 33406 / DSM 1761 / CIP 103989 / NBRC 15051 / NCIMB 9469 / D465).